A 386-amino-acid chain; its full sequence is Caspase-12 (386 aa).

Positions 1–91 (MAGKRQSQDP…LLSLKSHAEN (91 aa)) constitute a CARD domain. Ser84 carries the phosphoserine modification. Residues His218 and Cys266 contribute to the active site.

It belongs to the peptidase C14A family. Heterotetramer that consists of two anti-parallel arranged heterodimers, each one formed by two subunits (Potential). May interact with TRAF2.

In terms of biological role, involved in the activation cascade of caspases responsible for apoptosis execution. In Canis lupus familiaris (Dog), this protein is Caspase-12.